The primary structure comprises 396 residues: Putative glycosyltransferase HOC1 (396 aa).

Residues 2 to 13 (AKTTKRASSFRR) lie on the Cytoplasmic side of the membrane. The chain crosses the membrane as a helical; Signal-anchor for type II membrane protein span at residues 14–34 (LMIFAIIALISLAFGVRYLFH). The Lumenal segment spans residues 35–396 (NSNATDLQKI…WKNTPKVEQK (362 aa)). Residue Asn37 is glycosylated (N-linked (GlcNAc...) asparagine).

This sequence belongs to the glycosyltransferase 32 family. Component of the M-Pol II complex composed of ANP1, MNN9, MNN10, MNN11 and HOC1.

It localises to the golgi apparatus. Its subcellular location is the cis-Golgi network membrane. In terms of biological role, the M-Pol II complex possesses alpha-1,6-mannosyltransferase activity and is probably involved in the elongation of the mannan backbone of N-linked glycans on cell wall and periplasmic proteins. The protein is Putative glycosyltransferase HOC1 (HOC1) of Saccharomyces cerevisiae (strain ATCC 204508 / S288c) (Baker's yeast).